The chain runs to 417 residues: Nuclear envelope integral membrane protein 2 (417 aa).

The N-terminal stretch at 1-24 (MGPRQGRWWLLLWLPPLATLPVRG) is a signal peptide. 5 helical membrane-spanning segments follow: residues 148–168 (NIMD…FFYA), 177–197 (FYYS…VLLL), 207–227 (TFWA…CQLM), 239–259 (IYVL…CYKH), and 280–300 (LVLV…IILL).

The protein belongs to the NEMP family.

The protein localises to the nucleus inner membrane. The sequence is that of Nuclear envelope integral membrane protein 2 (NEMP2) from Homo sapiens (Human).